A 365-amino-acid chain; its full sequence is Chorismate synthase (365 aa).

Arg48 and Arg54 together coordinate NADP(+). Residues 131 to 133, 243 to 244, Gly288, 303 to 307, and Arg329 each bind FMN; these read RSS, NA, and KPTSS.

The protein belongs to the chorismate synthase family. Homotetramer. It depends on FMNH2 as a cofactor.

It catalyses the reaction 5-O-(1-carboxyvinyl)-3-phosphoshikimate = chorismate + phosphate. It functions in the pathway metabolic intermediate biosynthesis; chorismate biosynthesis; chorismate from D-erythrose 4-phosphate and phosphoenolpyruvate: step 7/7. Its function is as follows. Catalyzes the anti-1,4-elimination of the C-3 phosphate and the C-6 proR hydrogen from 5-enolpyruvylshikimate-3-phosphate (EPSP) to yield chorismate, which is the branch point compound that serves as the starting substrate for the three terminal pathways of aromatic amino acid biosynthesis. This reaction introduces a second double bond into the aromatic ring system. The polypeptide is Chorismate synthase (Rhizobium etli (strain CIAT 652)).